We begin with the raw amino-acid sequence, 501 residues long: MGERTPMLKMVGVSKSFPGVKALDNVSLMAYGGEVTALMGENGAGKSTLMKILSGVYKKDEGKIFIEGREVEVKGIKSAEEAGITIIHQELSVLNNLTVSENIFLGNEKHSKFTGRINKKLLDERSKMFLEQIGCDIDPNRLVSTLNVGEKQMIEIAKALTKNARIIIMDEPTTALTDVETENLFKVIENLRKKGIAIIYISHRMEEIFKICHRVEVLRDGKYTGSAEIKDIDNDKLIAMMVGRTIEDQFPYRDVKKGDLALEVKNLSCKEGVKGASFTLRKGEILGIAGLMGSGRTELAKTIFGEYKKTSGEISLNGSLININCISDAINNGICYLSEDRKKEGCILGMSVGENMTLCNLKKYENKFKSLDKKEEAKDIEYYIKKINIKTPNKEQFIKNLSGGNQQKVILAKWLMLSPEVLIIDEPTRGIDVGAKKEIYELLNELKASGKAIIMISSDLPEVLGISDRIMVMSEGRISGELNRDEANQESIMKLAVGINN.

ABC transporter domains lie at Leu-8–Thr-245 and Val-255–Asn-500. Gly-40–Ser-47 lines the ATP pocket.

The protein belongs to the ABC transporter superfamily. Ribose importer (TC 3.A.1.2.1) family. As to quaternary structure, the complex is composed of an ATP-binding protein (RbsA), two transmembrane proteins (RbsC) and a solute-binding protein (RbsB).

It localises to the cell membrane. It catalyses the reaction D-ribose(out) + ATP + H2O = D-ribose(in) + ADP + phosphate + H(+). Part of the ABC transporter complex RbsABC involved in ribose import. Responsible for energy coupling to the transport system. The chain is Ribose import ATP-binding protein RbsA from Clostridium perfringens (strain SM101 / Type A).